The sequence spans 204 residues: MSRGALIVFEGLDKSGKTTQCMNIMESIPSNTIKYLNFPQRSTVTGKMIDDYLTRKKTYNDHIVNLLFCANRWEFASFIQEQLEQGITLIVDRYAFSGVAYAAAKGAPMTLSKSYESGLPKPDLVIFLESGSKEINRNVGEEIYEDVEFQQKVLQEYKKMIEEGDIHWQIISSEFEEDVKKELIKNIVIEAMHTVTGPVGQLWM.

11–18 (GLDKSGKT) is an ATP binding site.

The protein belongs to the thymidylate kinase family.

It catalyses the reaction dTMP + ATP = dTDP + ADP. The protein operates within pyrimidine metabolism; dTTP biosynthesis. The protein is Thymidylate kinase (TMK) of Ectromelia virus (strain Moscow) (ECTV).